The following is a 473-amino-acid chain: Mogroside IIIx synthase (473 aa).

Catalysis depends on H43, which acts as the Proton acceptor. D142 functions as the Charge relay in the catalytic mechanism. Positions 293, 356, 374, 375, 376, 379, 395, and 396 each coordinate UDP-alpha-D-glucose.

The protein belongs to the UDP-glycosyltransferase family. In terms of tissue distribution, highly expressed in mature fruits.

The catalysed reaction is mogroside IIE + UDP-alpha-D-glucose = mogroside IIIX + UDP + H(+). It carries out the reaction mogroside III + UDP-alpha-D-glucose = mogroside IV + UDP + H(+). The enzyme catalyses mogroside III + UDP-alpha-D-glucose = siamenoside I + UDP + H(+). It catalyses the reaction mogroside IIIX + UDP-alpha-D-glucose = mogroside IVA + UDP + H(+). The catalysed reaction is mogroside IIIX + UDP-alpha-D-glucose = siamenoside I + UDP + H(+). It carries out the reaction mogroside IV + UDP-alpha-D-glucose = mogroside V + UDP + H(+). The enzyme catalyses siamenoside I + UDP-alpha-D-glucose = mogroside V + UDP + H(+). It catalyses the reaction mogroside V + UDP-alpha-D-glucose = mogroside VI + UDP + H(+). It participates in secondary metabolite biosynthesis; terpenoid biosynthesis. Activity is increased by Mg(2+). Its function is as follows. UDP-glycosyltransferase involved in the biosynthesis of cucurbitacin and mogroside tetracyclic triterpene natural products (e.g. siamenoside I and mogrosides IV, V and VI). Cucurbitacins have cytotoxic properties and exhibit deterrent taste as a defense barrier against herbivores. Mogrosides are nonsugar highly oxygenated compounds used as high-intensity zero-calorie sweeteners; they also possess pharmacological properties such as regulating immunity, lowering blood sugar and lipid levels, protecting the liver, and acting as antioxidants and antitumor agents. Catalyzes the branched glucosylations of mogroside II-E, mogroside III, mogroside IIIx, mogroside IV, mogroside IV-A, siamenoside I and mogroside V, ending in the production of mogroside VI. Functionally, catalyzes the beta(1-6) branched glucosylations of mogroside II-E to produce mogroside IIIx by forming a beta(1-6) glycosidic bond with the 6-hydroxyl of glucose 1-C24; a subsequent glycosylation at glucose 1-C3 leads to the formation of mogroside IV-A with beta(1-6) glycosidic bond. Can also use mogroside III-E, mogroside III-A, mogroside IV-E and mogroside IV-A as substrates. In Siraitia grosvenorii (Monk's fruit), this protein is Mogroside IIIx synthase.